A 725-amino-acid chain; its full sequence is Ferric reduction oxidase 2 (725 aa).

Over 1–28 (MEIEKSNNGGSNPSAGEEFKDMIKGVTK) the chain is Cytoplasmic. Residues 29 to 48 (FLMMVIFLGTIMLWIMMPTL) form a helical membrane-spanning segment. The Extracellular segment spans residues 49-74 (TYRTKWLPHLRIKFGTSTYFGATGTT). Residues 75–93 (LFMYMFPMMVVACLGCVYL) form a helical membrane-spanning segment. Residues 94–125 (HFKNRKSPHHIDRETKGGVWSKLRKPMLVKGP) lie on the Cytoplasmic side of the membrane. A helical membrane pass occupies residues 126–149 (LGIVSVTEITFLAMFVALLLWCFI). The Extracellular portion of the chain corresponds to 150 to 217 (TYLRNSFATI…MGLTSESSIK (68 aa)). The Ferric oxidoreductase domain maps to 183 to 303 (LGLIGNICLA…YLYIVFMLFF (121 aa)). The chain crosses the membrane as a helical span at residues 218-241 (YHIWLGHMVMALFTVHGLCYIIYW). H219 and H233 together coordinate heme. Topologically, residues 242–291 (ASMHEISQMIMWDTKGVSNLAGEIALAAGLVMWATTYPKIRRRFFEVFFY) are cytoplasmic. A helical membrane pass occupies residues 292–316 (THYLYIVFMLFFVLHVGISFSFIAL). The heme site is built by H293 and H306. Topologically, residues 317 to 338 (PGFYIFLVDRFLRFLQSRENVR) are extracellular. Residues 332 to 437 (QSRENVRLLA…EGPYGPASAD (106 aa)) enclose the FAD-binding FR-type domain. A helical membrane pass occupies residues 339 to 359 (LLAARILPSDTMELTFSKNSK). At 360 to 554 (LVYSPTSIMF…SISSILGPNS (195 aa)) the chain is on the cytoplasmic side. An FAD-binding site is contributed by 381–384 (HPFT). 429–432 (GPYG) is an NAD(+) binding site. Residues 555 to 577 (WLWLGAILASSFLIFMIIIGIIT) form a helical membrane-spanning segment. The Extracellular portion of the chain corresponds to 578–597 (RYYIYPIDHNTNKIYSLTSK). The chain crosses the membrane as a helical span at residues 598–619 (TIIYILVISVSIMATCSAAMLW). Topologically, residues 620-725 (NKKKYGKVES…LHFESISFSW (106 aa)) are cytoplasmic.

The protein belongs to the ferric reductase (FRE) family. FAD serves as cofactor. As to expression, expressed in the epidermal cells of the roots. High expression in lateral roots and root hairs. Detected in leaves, stems, siliques and in flowers in anthers and styles.

It localises to the cell membrane. The enzyme catalyses 2 a Fe(II)-siderophore + NAD(+) + H(+) = 2 a Fe(III)-siderophore + NADH. Functionally, flavocytochrome that transfers electrons across the plasma membrane to reduce ferric iron chelates to form soluble ferrous iron in the rhizosphere. May be involved in the delivery of iron to developing pollen grains. Also acts as a copper-chelate reductase. Involved in glycine betaine-mediated chilling tolerance and reactive oxygen species accumulation. The sequence is that of Ferric reduction oxidase 2 (FRO2) from Arabidopsis thaliana (Mouse-ear cress).